The sequence spans 296 residues: Acetyl-coenzyme A carboxylase carboxyl transferase subunit beta (296 aa).

Residues 25 to 294 (LWIKDPSTGE…NSDAPAPPEA (270 aa)) form the CoA carboxyltransferase N-terminal domain.

Belongs to the AccD/PCCB family. Acetyl-CoA carboxylase is a heterohexamer composed of biotin carboxyl carrier protein (AccB), biotin carboxylase (AccC) and two subunits each of ACCase subunit alpha (AccA) and ACCase subunit beta (AccD).

Its subcellular location is the cytoplasm. It catalyses the reaction N(6)-carboxybiotinyl-L-lysyl-[protein] + acetyl-CoA = N(6)-biotinyl-L-lysyl-[protein] + malonyl-CoA. It functions in the pathway lipid metabolism; malonyl-CoA biosynthesis; malonyl-CoA from acetyl-CoA: step 1/1. In terms of biological role, component of the acetyl coenzyme A carboxylase (ACC) complex. Biotin carboxylase (BC) catalyzes the carboxylation of biotin on its carrier protein (BCCP) and then the CO(2) group is transferred by the transcarboxylase to acetyl-CoA to form malonyl-CoA. This is Acetyl-coenzyme A carboxylase carboxyl transferase subunit beta from Brucella ovis (strain ATCC 25840 / 63/290 / NCTC 10512).